Consider the following 437-residue polypeptide: FK506-binding protein 3 (437 aa).

Acidic residues-rich tracts occupy residues 73 to 90, 106 to 131, and 179 to 220; these read DIEAEEADELDSEEEEEE, EEEEDEDEEDLDIDGSSDEEDDEDVS, and ADED…DASD. Disordered stretches follow at residues 73 to 132 and 169 to 349; these read DIEA…DVSE and HLTG…QTAK. Basic and acidic residues-rich tracts occupy residues 256-270 and 292-324; these read KKEDKKSVQFTKDLE and AKKEEPKKEEPKKEQPKKEQPKKEQPKKEEASK. Residues 351 to 437 enclose the PPIase FKBP-type domain; that stretch reads GNKVGIRYIG…TFDIKLVSIK (87 aa).

The protein belongs to the FKBP-type PPIase family. FKBP3/4 subfamily.

The protein localises to the nucleus. Its subcellular location is the nucleolus. The catalysed reaction is [protein]-peptidylproline (omega=180) = [protein]-peptidylproline (omega=0). With respect to regulation, inhibited by both FK506 and rapamycin. PPIases accelerate the folding of proteins. It catalyzes the cis-trans isomerization of proline imidic peptide bonds in oligopeptides. The chain is FK506-binding protein 3 (FPR3) from Debaryomyces hansenii (strain ATCC 36239 / CBS 767 / BCRC 21394 / JCM 1990 / NBRC 0083 / IGC 2968) (Yeast).